Reading from the N-terminus, the 282-residue chain is 4-hydroxybenzoate octaprenyltransferase (282 aa).

A run of 9 helical transmembrane segments spans residues 17 to 37 (IGIL…NQGF), 40 to 60 (IDLL…GCVI), 90 to 110 (AFIL…KLPI), 113 to 133 (FYFA…KRFL), 135 to 155 (APQL…FIAS), 163 to 183 (FIVL…MYAM), 207 to 227 (LIIA…AINK), 231 to 251 (WFFY…LKLI), and 262 to 282 (AFLV…LALI).

Belongs to the UbiA prenyltransferase family. It depends on Mg(2+) as a cofactor.

The protein resides in the cell inner membrane. The enzyme catalyses all-trans-octaprenyl diphosphate + 4-hydroxybenzoate = 4-hydroxy-3-(all-trans-octaprenyl)benzoate + diphosphate. Its pathway is cofactor biosynthesis; ubiquinone biosynthesis. In terms of biological role, catalyzes the prenylation of para-hydroxybenzoate (PHB) with an all-trans polyprenyl group. Mediates the second step in the final reaction sequence of ubiquinone-8 (UQ-8) biosynthesis, which is the condensation of the polyisoprenoid side chain with PHB, generating the first membrane-bound Q intermediate 3-octaprenyl-4-hydroxybenzoate. In Legionella pneumophila (strain Corby), this protein is 4-hydroxybenzoate octaprenyltransferase.